A 122-amino-acid polypeptide reads, in one-letter code: uncharacterized protein (122 aa).

The protein resides in the plastid. This is an uncharacterized protein from Euglena longa (Euglenophycean alga).